The chain runs to 656 residues: Anion exchange transporter (656 aa).

The Cytoplasmic segment spans residues 1–75; the sequence is MTGAKRKKRS…LSFAMLSSVH (75 aa). Residues 76-96 form a helical membrane-spanning segment; it reads PVFGLYGSLFPAIIYAIFGMG. Residues 97-144 lie on the Extracellular side of the membrane; that stretch reads RHVATGTFALTSLISANAVERLVPQSSRNLTTQSNSSVLGLSEFELQR. A helical transmembrane segment spans residues 145 to 165; the sequence is IGVAAAVSFLGGVIQLVMFVL. A topological domain (cytoplasmic) is located at residue Gln-166. Residues 167–187 form a helical membrane-spanning segment; that stretch reads LGSATFLLTEPVISAMTTGAA. At 188–199 the chain is on the extracellular side; it reads THVVTSQVKYLL. A helical membrane pass occupies residues 200–220; it reads GIKMPYISGPLGFFYIYAYVF. Residues 221-222 lie on the Cytoplasmic side of the membrane; the sequence is EN. Residues 223–243 traverse the membrane as a helical segment; the sequence is IKSVQLEALLFSLLSIIVLVL. Topologically, residues 244 to 254 are extracellular; the sequence is VKELNEQFKRK. Residues 255-275 form a helical membrane-spanning segment; that stretch reads IKVVLPVDLVLIIAASFACYC. Topologically, residues 276–306 are cytoplasmic; sequence TNMENTYGLEVVGHIPNGIPPPRAPPMNILS. The chain crosses the membrane as a helical span at residues 307-327; the sequence is AVLTEAFGVALVGYVASLALA. Over 328–343 the chain is Extracellular; sequence QGSAKKFKYSVDDNQE. Residues 344 to 364 form a helical membrane-spanning segment; sequence FLAHGLSNVIPSFLFCIPSAA. The Cytoplasmic portion of the chain corresponds to 365 to 383; that stretch reads AMGRTAGLYSTGAKTQVAC. The next 2 helical transmembrane spans lie at 384–404 and 405–425; these read LISCIFVLIVIYAIGPLLYWL and PMCVLASIIVVGLKGMLIQFR. Over 426–448 the chain is Extracellular; the sequence is DLKKYWNVDKIDWGIWISTYIFT. A helical membrane pass occupies residues 449 to 469; it reads ICFAANVGLLFGVICTIAIVL. Over 470 to 656 the chain is Cytoplasmic; it reads GRFPRAKTLS…LSKASDHSEV (187 aa). Residues 492-641 form the STAS domain; sequence TEMHDETSQQ…DSVPAAISII (150 aa). The membrane targeting stretch occupies residues 641–656; it reads IQSNKNLSKASDHSEV.

This sequence belongs to the SLC26A/SulP transporter (TC 2.A.53) family. As to expression, expressed in the Reissner's membrane epithelial cells in the cochlea (at protein level). Expressed in the retinal pigment epithelium (at protein level). Abundantly expressed in parietal cells on the glandular portion of the stomach. Lower levels are observed in the kidney, with expression in the proximal tubule and thick ascending limb of the loop of Henle. Also expressed in distal segments of nephron, in extraglomerular mesagial cells and a subpopulation of intercalated cells of outer medullary collecting ducts. Expressed in the thyroid gland.

The protein resides in the basolateral cell membrane. It localises to the recycling endosome membrane. It is found in the apical cell membrane. Its subcellular location is the lateral cell membrane. The catalysed reaction is chloride(in) = chloride(out). It catalyses the reaction iodide(out) = iodide(in). The enzyme catalyses bromide(in) = bromide(out). It carries out the reaction oxalate(in) = oxalate(out). The catalysed reaction is nitrate(in) = nitrate(out). It catalyses the reaction sulfate(in) = sulfate(out). The enzyme catalyses hydrogencarbonate(in) = hydrogencarbonate(out). It carries out the reaction D-gluconate(in) = D-gluconate(out). The catalysed reaction is thiocyanate(in) = thiocyanate(out). It catalyses the reaction hydrogencarbonate(in) + chloride(out) = hydrogencarbonate(out) + chloride(in). Its activity is regulated as follows. Regulated by pH. Activity inhibited by all inhibitors of several anion channels and transporters, including 4,4'-Di-isothiocyanatostilbene-2,2'-disulfonic acid (DIDS), diphenylamine-2-carboxylic acid, glybenclamide and 5-Nitro-2-(3-phenylpropyl-amino)benzoic acid. Acts as an anion channel mediating the transport of chloride, bromide, iodide, nitrate, sulfate, gluconate, thiocyanate and bicarbonate ions. Its permeability towards bicarbonate is weak and increases when pH is above 7. Mediates oxalate transport. Mediates thiocyanate transport in retinal pigment epithelium cells. Mediates iodide transport in the thyroid gland, playing an important role in the synthesis of thyroid hormones and the maintenance of thyroid function. Although it is an anion channel, according to PubMed:12736153 and PubMed:19723628 it has been shown to exhibit chloride-bicarbonate exchanger activity. The chain is Anion exchange transporter from Mus musculus (Mouse).